The following is a 601-amino-acid chain: Elongation factor 4 (601 aa).

Residues 5 to 187 (ENIRNFCIVA…AIITTFPPPK (183 aa)) form the tr-type G domain. GTP-binding positions include 17–22 (DHGKST) and 134–137 (NKID).

The protein belongs to the TRAFAC class translation factor GTPase superfamily. Classic translation factor GTPase family. LepA subfamily.

The protein localises to the cell inner membrane. The enzyme catalyses GTP + H2O = GDP + phosphate + H(+). Functionally, required for accurate and efficient protein synthesis under certain stress conditions. May act as a fidelity factor of the translation reaction, by catalyzing a one-codon backward translocation of tRNAs on improperly translocated ribosomes. Back-translocation proceeds from a post-translocation (POST) complex to a pre-translocation (PRE) complex, thus giving elongation factor G a second chance to translocate the tRNAs correctly. Binds to ribosomes in a GTP-dependent manner. This is Elongation factor 4 from Treponema denticola (strain ATCC 35405 / DSM 14222 / CIP 103919 / JCM 8153 / KCTC 15104).